The chain runs to 125 residues: Glycine cleavage system H protein (125 aa).

The 83-residue stretch at 22-104 (SYVIGITDFA…YDTGWILKLE (83 aa)) folds into the Lipoyl-binding domain. N6-lipoyllysine is present on Lys-63.

It belongs to the GcvH family. In terms of assembly, the glycine cleavage system is composed of four proteins: P, T, L and H. (R)-lipoate serves as cofactor.

In terms of biological role, the glycine cleavage system catalyzes the degradation of glycine. The H protein shuttles the methylamine group of glycine from the P protein to the T protein. Its function is as follows. Is also involved in protein lipoylation via its role as an octanoyl/lipoyl carrier protein intermediate. This chain is Glycine cleavage system H protein, found in Listeria monocytogenes serotype 4b (strain CLIP80459).